The sequence spans 37 residues: Mating pheromone Er-22 (37 aa).

3 disulfide bridges follow: cysteine 3/cysteine 18, cysteine 10/cysteine 32, and cysteine 15/cysteine 24.

It localises to the secreted. In terms of biological role, mating ciliate pheromones (or gamones) are diffusible extracellular communication signals that distinguish different intraspecific classes of cells commonly referred to as 'mating types'. They prepare the latter for conjugation by changing their cell surface properties. In Euplotes raikovi, this protein is Mating pheromone Er-22 (MAT22).